Here is a 304-residue protein sequence, read N- to C-terminus: MWFKNLTLYRFNKPFSIETEALETALADFTFSPCGSQDVSKFGFSNALGKKGSTLVHSANNRHLICVTKEEKILPAQVIKESLEEKVAQIEDEENRKLAKKEKDALKDEIITSLLPRAFSRRSQTRALILPELEMILVDSSSATKAEELLALLRKALGSLPVIPLSFKAPIESQLTEWLKNGSAPLPFEMQDEAELKSAADEGGIVRFKQQDLKEDEVLAHLETGKEVHKLALHFGQSIALLLQSDASVKRLKFSEEFRAGNDELGNEDPMARLDADFALMGSELVALMHALVSALGGIEETQA.

This sequence belongs to the RdgC family.

The protein resides in the cytoplasm. Its subcellular location is the nucleoid. May be involved in recombination. The protein is Recombination-associated protein RdgC of Shewanella oneidensis (strain ATCC 700550 / JCM 31522 / CIP 106686 / LMG 19005 / NCIMB 14063 / MR-1).